Reading from the N-terminus, the 2060-residue chain is Fatty acid synthase subunit beta (2060 aa).

A disordered region spans residues 1 to 32 (MFPGDMESKASSMNGDQPSSPTPSSSTSVTIP). Residues 18-32 (PSSPTPSSSTSVTIP) are compositionally biased toward low complexity. The tract at residues 182–543 (VYVIFGGQGN…KAGQGVRVIH (362 aa)) is acetyltransferase (AT) domain. The active-site For acetyltransferase activity is the serine 301. Residues 600–845 (TRLFLQPPIM…LIVATEGAPD (246 aa)) are enoyl reductase (ER) domain. Residues 1157 to 1640 (DKNLNWAKAL…CTGDRLAVSM (484 aa)) are dehydratase (DH) domain. Residues 1549–1661 (FEEQEISFTA…VEVQIHKNMA (113 aa)) enclose the MaoC-like domain. Positions 1679–2043 (LVFTGQGSQK…FNEVLRLTGS (365 aa)) are malonyl/palmitoyl transferase (MT/PT) domain. The active-site For malonyltransferase activity is the serine 1824.

The protein belongs to the fungal fatty acid synthetase subunit beta family. In terms of assembly, [Alpha(6)beta(6)] hexamers of two multifunctional subunits (alpha and beta).

The enzyme catalyses acetyl-CoA + n malonyl-CoA + 2n NADPH + 4n H(+) = a long-chain-acyl-CoA + n CoA + n CO2 + 2n NADP(+).. It carries out the reaction holo-[ACP] + acetyl-CoA = acetyl-[ACP] + CoA. It catalyses the reaction holo-[ACP] + malonyl-CoA = malonyl-[ACP] + CoA. The catalysed reaction is a (3R)-hydroxyacyl-[ACP] = a (2E)-enoyl-[ACP] + H2O. The enzyme catalyses a 2,3-saturated acyl-[ACP] + NAD(+) = a (2E)-enoyl-[ACP] + NADH + H(+). It carries out the reaction (9Z)-octadecenoyl-[ACP] + H2O = (9Z)-octadecenoate + holo-[ACP] + H(+). The protein operates within mycotoxin biosynthesis. In terms of biological role, fatty acid synthase subunit beta; part of the gene cluster that mediates the biosynthesis of gramillins A and B, bicyclic lipopeptides that induce cell death in maize leaves but not in wheat leaves. The nonribosomal peptide synthetase GRA1 incorporates respectively a glutamic adic (Glu), a leucine (Leu), a serine (Ser), a hydroxyglutamine (HOGln), a 2-amino decanoic acid, and 2 cysteins (CysB and CysA). The biosynthesis of 2-amino decanoic acid incorporated in gramillins could be initiated by a fatty acid synthase composed of the alpha and beta subunits FGSG_00036 and FGSG_11656. The cytochrome P450 monooxygenase FGSG_15680 could hydroxylate the fatty acid chain. Subsequent oxidation to the ketone by the oxidoreductase FGSG_00048 and transamination by aminotransferase FGSG_00049 could form 2-amino-decanoic acid. On the other hand, FGSG_15680 could also be responsible for the HO-modified glutamine at the gamma-position. Whether hydroxylation occurs on the fully assembled product or on the Gln residue prior to assembly into the gramillins requires further proof. The thioredoxin FGSG_00043 could also be required for the disulfide-bond formation between CysA and CysB. The specific involvement of the remaining proteins from the cluster is more difficult to discern, but could have broader regulatory (FGSG_00040 and FGSG_11657) or enzymatic functions (FGSG_00044 and FGSG_00045). The final C-domain of GRA1 does not possess the expected sequence of a termination CT domain, often implicated in macrocyclization and release of a cyclopeptidein fungal NRPs; and the thioesterase FGSG_00047 may act in concert with the terminal C-domain of GRA1 to catalyze the formation of the macrocyclic anhydride and release of the products. The chain is Fatty acid synthase subunit beta from Gibberella zeae (strain ATCC MYA-4620 / CBS 123657 / FGSC 9075 / NRRL 31084 / PH-1) (Wheat head blight fungus).